Reading from the N-terminus, the 211-residue chain is Large ribosomal subunit protein eL13 (211 aa).

Lysine 16 bears the N6-acetyllysine mark. A phosphoserine mark is found at serine 52, serine 77, and serine 106. Glycyl lysine isopeptide (Lys-Gly) (interchain with G-Cter in SUMO2) cross-links involve residues lysine 123 and lysine 145. A Glycyl lysine isopeptide (Lys-Gly) (interchain with G-Cter in SUMO1); alternate cross-link involves residue lysine 174. Residues lysine 174 and lysine 177 each participate in a glycyl lysine isopeptide (Lys-Gly) (interchain with G-Cter in SUMO2); alternate cross-link. Lysine 177 carries the post-translational modification N6-acetyllysine; alternate.

The protein belongs to the eukaryotic ribosomal protein eL13 family. As to quaternary structure, component of the 60S large ribosomal subunit (LSU).

The protein resides in the cytoplasm. Its function is as follows. Component of the ribosome, a large ribonucleoprotein complex responsible for the synthesis of proteins in the cell. The small ribosomal subunit (SSU) binds messenger RNAs (mRNAs) and translates the encoded message by selecting cognate aminoacyl-transfer RNA (tRNA) molecules. The large subunit (LSU) contains the ribosomal catalytic site termed the peptidyl transferase center (PTC), which catalyzes the formation of peptide bonds, thereby polymerizing the amino acids delivered by tRNAs into a polypeptide chain. The nascent polypeptides leave the ribosome through a tunnel in the LSU and interact with protein factors that function in enzymatic processing, targeting, and the membrane insertion of nascent chains at the exit of the ribosomal tunnel. As part of the LSU, it is probably required for its formation and the maturation of rRNAs. Plays a role in bone development. This Cricetulus griseus (Chinese hamster) protein is Large ribosomal subunit protein eL13 (RPL13).